A 338-amino-acid chain; its full sequence is ATPase GET3 (338 aa).

33–40 (KGGVGKTT) is a binding site for ATP. Asp62 is a catalytic residue. Glu242 and Asn269 together coordinate ATP. Zn(2+) is bound by residues Cys280 and Cys283.

The protein belongs to the arsA ATPase family. As to quaternary structure, homodimer.

The protein resides in the cytoplasm. Its subcellular location is the endoplasmic reticulum. ATPase required for the post-translational delivery of tail-anchored (TA) proteins to the endoplasmic reticulum. Recognizes and selectively binds the transmembrane domain of TA proteins in the cytosol. This complex then targets to the endoplasmic reticulum by membrane-bound receptors, where the tail-anchored protein is released for insertion. This process is regulated by ATP binding and hydrolysis. ATP binding drives the homodimer towards the closed dimer state, facilitating recognition of newly synthesized TA membrane proteins. ATP hydrolysis is required for insertion. Subsequently, the homodimer reverts towards the open dimer state, lowering its affinity for the membrane-bound receptor, and returning it to the cytosol to initiate a new round of targeting. This chain is ATPase GET3, found in Uncinocarpus reesii (strain UAMH 1704).